A 618-amino-acid polypeptide reads, in one-letter code: Proline--tRNA ligase (618 aa).

It belongs to the class-II aminoacyl-tRNA synthetase family. ProS type 1 subfamily. Homodimer.

The protein localises to the cytoplasm. The catalysed reaction is tRNA(Pro) + L-proline + ATP = L-prolyl-tRNA(Pro) + AMP + diphosphate. In terms of biological role, catalyzes the attachment of proline to tRNA(Pro) in a two-step reaction: proline is first activated by ATP to form Pro-AMP and then transferred to the acceptor end of tRNA(Pro). As ProRS can inadvertently accommodate and process non-cognate amino acids such as alanine and cysteine, to avoid such errors it has two additional distinct editing activities against alanine. One activity is designated as 'pretransfer' editing and involves the tRNA(Pro)-independent hydrolysis of activated Ala-AMP. The other activity is designated 'posttransfer' editing and involves deacylation of mischarged Ala-tRNA(Pro). The misacylated Cys-tRNA(Pro) is not edited by ProRS. This chain is Proline--tRNA ligase, found in Streptococcus pyogenes serotype M2 (strain MGAS10270).